Consider the following 53-residue polypeptide: UPF0391 membrane protein Patl_1732 (53 aa).

Helical transmembrane passes span 4 to 24 (WAVI…GGIA) and 28 to 48 (AGIA…SVVM).

It belongs to the UPF0391 family.

The protein localises to the cell membrane. The sequence is that of UPF0391 membrane protein Patl_1732 from Pseudoalteromonas atlantica (strain T6c / ATCC BAA-1087).